Here is a 270-residue protein sequence, read N- to C-terminus: Energy-coupling factor transporter transmembrane protein EcfT (270 aa).

The next 4 helical transmembrane spans lie at 36-56 (LFIV…LISI), 72-92 (PIFI…GGAN), 108-128 (LIMA…TSLL), and 248-268 (FIAS…RIWW).

Belongs to the energy-coupling factor EcfT family. In terms of assembly, forms a stable energy-coupling factor (ECF) transporter complex composed of 2 membrane-embedded substrate-binding proteins (S component), 2 ATP-binding proteins (A component) and 2 transmembrane proteins (T component). May be able to interact with more than 1 S component at a time.

It localises to the cell membrane. Functionally, transmembrane (T) component of an energy-coupling factor (ECF) ABC-transporter complex. Unlike classic ABC transporters this ECF transporter provides the energy necessary to transport a number of different substrates. In Clostridium kluyveri (strain ATCC 8527 / DSM 555 / NBRC 12016 / NCIMB 10680 / K1), this protein is Energy-coupling factor transporter transmembrane protein EcfT.